We begin with the raw amino-acid sequence, 531 residues long: Bifunctional protein TrpGD (531 aa).

Residues 3–196 enclose the Glutamine amidotransferase type-1 domain; the sequence is DILLLDNIDS…LAWAQQKLEP (194 aa). An L-glutamine-binding site is contributed by 57–59; the sequence is GPG. Cysteine 84 (nucleophile; for GATase activity) is an active-site residue. L-glutamine contacts are provided by residues glutamine 88 and 134–135; that span reads SL. Active-site for GATase activity residues include histidine 170 and glutamate 172. The segment at 202 to 531 is anthranilate phosphoribosyltransferase; that stretch reads PILEKLYQAQ…DRVTALAARG (330 aa).

In the C-terminal section; belongs to the anthranilate phosphoribosyltransferase family. As to quaternary structure, heterotetramer consisting of two non-identical subunits: a beta subunit (TrpG) and a large alpha subunit (TrpE).

The catalysed reaction is chorismate + L-glutamine = anthranilate + pyruvate + L-glutamate + H(+). It carries out the reaction N-(5-phospho-beta-D-ribosyl)anthranilate + diphosphate = 5-phospho-alpha-D-ribose 1-diphosphate + anthranilate. Its pathway is amino-acid biosynthesis; L-tryptophan biosynthesis; L-tryptophan from chorismate: step 1/5. It functions in the pathway amino-acid biosynthesis; L-tryptophan biosynthesis; L-tryptophan from chorismate: step 2/5. Cooperatively feedback inhibited by tryptophan. Functionally, part of a heterotetrameric complex that catalyzes the two-step biosynthesis of anthranilate, an intermediate in the biosynthesis of L-tryptophan. In the first step, the glutamine-binding beta subunit (TrpG) of anthranilate synthase (AS) provides the glutamine amidotransferase activity which generates ammonia as a substrate that, along with chorismate, is used in the second step, catalyzed by the large alpha subunit of AS (TrpE) to produce anthranilate. In the absence of TrpG, TrpE can synthesize anthranilate directly from chorismate and high concentrations of ammonia. In addition to synthesizing anthranilate, it also catalyzes the second step of the pathway, the transfer of the phosphoribosyl group of 5-phosphorylribose-1-pyrophosphate (PRPP) to anthranilate. The sequence is that of Bifunctional protein TrpGD (trpGD) from Escherichia coli (strain K12).